The following is a 212-amino-acid chain: Nascent polypeptide-associated complex subunit alpha (212 aa).

Disordered regions lie at residues 1–54 (MSNP…SRNE) and 123–177 (QLAA…EDKD). Residues 22 to 38 (AEDEGSDSSDSEAEGEE) are compositionally biased toward acidic residues. The 66-residue stretch at 51–116 (SRNEKKARKS…AKIEDLNSQA (66 aa)) folds into the NAC-A/B domain. Basic and acidic residues predominate over residues 128–157 (ESHDHAGHDHSGHDHSHDHGKGKAVDTEEK). Residues 158 to 169 (KEEEEDDTEEVD) show a composition bias toward acidic residues. The UBA domain occupies 173 to 212 (LEDKDIELVMTQASVSRNKAVKALKENDNDIVNSIMALSI).

The protein belongs to the NAC-alpha family. As to quaternary structure, part of the nascent polypeptide-associated complex (NAC), consisting of EGD2 and EGD1. NAC associates with ribosomes via EGD1.

The protein localises to the cytoplasm. The protein resides in the nucleus. Its function is as follows. Component of the nascent polypeptide-associated complex (NAC), a dynamic component of the ribosomal exit tunnel, protecting the emerging polypeptides from interaction with other cytoplasmic proteins to ensure appropriate nascent protein targeting. The NAC complex also promotes mitochondrial protein import by enhancing productive ribosome interactions with the outer mitochondrial membrane and blocks the inappropriate interaction of ribosomes translating non-secretory nascent polypeptides with translocation sites in the membrane of the endoplasmic reticulum. EGD2 may also be involved in transcription regulation. This chain is Nascent polypeptide-associated complex subunit alpha (egd2), found in Botryotinia fuckeliana (strain B05.10) (Noble rot fungus).